The sequence spans 119 residues: MIRGIGVDVVDVARFARSAERTPGLVPRLFAPAERSLPARSLAARFAAKEALIKALGGPGGISWQDMEVVRDEHGDPSFRVAGVVAQVAAARGVTRIHLSMSHDAGLATAFVVTEGDAP.

Mg(2+) contacts are provided by D8 and E50.

Belongs to the P-Pant transferase superfamily. AcpS family. Mg(2+) serves as cofactor.

It localises to the cytoplasm. It catalyses the reaction apo-[ACP] + CoA = holo-[ACP] + adenosine 3',5'-bisphosphate + H(+). Its function is as follows. Transfers the 4'-phosphopantetheine moiety from coenzyme A to a Ser of acyl-carrier-protein. This Clavibacter michiganensis subsp. michiganensis (strain NCPPB 382) protein is Holo-[acyl-carrier-protein] synthase.